A 111-amino-acid polypeptide reads, in one-letter code: Protein GLUTAMINE DUMPER 6 (111 aa).

Residues 1-16 (MRPTPKVEIWKSPVPY) are Extracellular-facing. A helical transmembrane segment spans residues 17-37 (LFGGLFLLVLLIALALLSLVC). Residues 38–111 (THQKPSSSSN…NCDNVTVIST (74 aa)) lie on the Cytoplasmic side of the membrane. Residues 40–49 (QKPSSSSNNN) show a composition bias toward polar residues. The segment at 40–63 (QKPSSSSNNNHMDEEDDVGDKDAK) is disordered. The short motif at 75 to 79 (VILAG) is the VIMAG; degenerate element.

It belongs to the GLUTAMINE DUMPER 1 (TC 9.B.60) family. As to expression, expressed in the vascular tissues.

The protein resides in the membrane. Its function is as follows. Probable subunit of an amino acid transporter involved in the regulation of the amino acid metabolism. Stimulates amino acid export by activating nonselective amino acid facilitators. The polypeptide is Protein GLUTAMINE DUMPER 6 (GDU6) (Arabidopsis thaliana (Mouse-ear cress)).